We begin with the raw amino-acid sequence, 152 residues long: Putative membrane protein insertion efficiency factor (152 aa).

Residues 81-152 (AAGGYDPVPG…IVGSGRGPWV (72 aa)) are disordered.

The protein belongs to the UPF0161 family.

It is found in the cell membrane. Its function is as follows. Could be involved in insertion of integral membrane proteins into the membrane. The protein is Putative membrane protein insertion efficiency factor of Frankia casuarinae (strain DSM 45818 / CECT 9043 / HFP020203 / CcI3).